A 479-amino-acid polypeptide reads, in one-letter code: MSWEIVIGLEVHVQLNTASKLFSGSKLSTGAEPNTQASLVDLGLPGTLPVVNREAVRKAALFGLAIDADICRHSVFERKNYFYPDLPKGYQTTQLAEPIVGAGTVEIQLDNGEKKSIRIHHAHLEEDAGKSLHEDFHGMTGIDLNRAGTPLIEIVSEPDMANAEEAVAFARKLHAIVTSIGICDGDMSQGNMRFDVNISVRKPGEPLGTRTETKNLNSFRFMEKAIALEVERQIDVLEDGGEIVQETRLYNGDTHTARSMRSKEDANDYRYFPCPDLLPVAITDADIEELKAAMPELPDSRKARFTNDYQLSEYDADLLSGSIATAAFFEAAAKSGGDAKLAANWVMGELAAKLNAEEKSITDSPVSAEQLGQLIARLKDGTISSKIAKQVFEACWAGEGNPDEIIEAKGLKQMSDTGELEKIVDDIIANNAAQADDYRNSDDAKKKKKIGFFVGQAMKATQGKANPQQLNKLLQEKLQ.

Belongs to the GatB/GatE family. GatB subfamily. As to quaternary structure, heterotrimer of A, B and C subunits.

It catalyses the reaction L-glutamyl-tRNA(Gln) + L-glutamine + ATP + H2O = L-glutaminyl-tRNA(Gln) + L-glutamate + ADP + phosphate + H(+). The enzyme catalyses L-aspartyl-tRNA(Asn) + L-glutamine + ATP + H2O = L-asparaginyl-tRNA(Asn) + L-glutamate + ADP + phosphate + 2 H(+). Its function is as follows. Allows the formation of correctly charged Asn-tRNA(Asn) or Gln-tRNA(Gln) through the transamidation of misacylated Asp-tRNA(Asn) or Glu-tRNA(Gln) in organisms which lack either or both of asparaginyl-tRNA or glutaminyl-tRNA synthetases. The reaction takes place in the presence of glutamine and ATP through an activated phospho-Asp-tRNA(Asn) or phospho-Glu-tRNA(Gln). This is Aspartyl/glutamyl-tRNA(Asn/Gln) amidotransferase subunit B from Alcanivorax borkumensis (strain ATCC 700651 / DSM 11573 / NCIMB 13689 / SK2).